The chain runs to 334 residues: Large ribosomal subunit protein uL3 (334 aa).

Positions 1-10 (MGMKKNRPRR) are enriched in basic residues. Residues 1 to 21 (MGMKKNRPRRGSLAFSPRKRA) are disordered.

Belongs to the universal ribosomal protein uL3 family. Part of the 50S ribosomal subunit. Forms a cluster with proteins L14 and L24e.

Functionally, one of the primary rRNA binding proteins, it binds directly near the 3'-end of the 23S rRNA, where it nucleates assembly of the 50S subunit. This Methanococcus vannielii (strain ATCC 35089 / DSM 1224 / JCM 13029 / OCM 148 / SB) protein is Large ribosomal subunit protein uL3.